The following is a 214-amino-acid chain: Predicted GPI-anchored protein 57 (214 aa).

The first 18 residues, methionine 1–cysteine 18, serve as a signal peptide directing secretion. The disordered stretch occupies residues arginine 36–asparagine 101. Gly residues predominate over residues serine 42 to serine 60. Residues serine 76–glycine 85 show a composition bias toward low complexity. The N-linked (GlcNAc...) asparagine glycan is linked to asparagine 182. A lipid anchor (GPI-anchor amidated glycine) is attached at glycine 191. The propeptide at valine 192–leucine 214 is removed in mature form.

Belongs to the PGA37 family.

It localises to the secreted. The protein resides in the cell membrane. Predicted GPI-anchored protein which may have a role during host infection. The polypeptide is Predicted GPI-anchored protein 57 (PGA57) (Candida albicans (strain SC5314 / ATCC MYA-2876) (Yeast)).